Reading from the N-terminus, the 105-residue chain is Spermatogenesis-associated protein 8 (105 aa).

As to expression, expressed at high levels in adult testis, at moderate levels in sperm and at low levels in fetal testis. Not detected in other tissues.

The protein is Spermatogenesis-associated protein 8 (SPATA8) of Homo sapiens (Human).